We begin with the raw amino-acid sequence, 294 residues long: N-acetylmuramic acid 6-phosphate etherase (294 aa).

The SIS domain occupies 56–219 (TSYSLRNGGR…STLSMVSVGK (164 aa)). The Proton donor role is filled by E84. Residue E115 is part of the active site.

Belongs to the GCKR-like family. MurNAc-6-P etherase subfamily. As to quaternary structure, homodimer.

It catalyses the reaction N-acetyl-D-muramate 6-phosphate + H2O = N-acetyl-D-glucosamine 6-phosphate + (R)-lactate. Its pathway is amino-sugar metabolism; 1,6-anhydro-N-acetylmuramate degradation. It participates in amino-sugar metabolism; N-acetylmuramate degradation. It functions in the pathway cell wall biogenesis; peptidoglycan recycling. Functionally, specifically catalyzes the cleavage of the D-lactyl ether substituent of MurNAc 6-phosphate, producing GlcNAc 6-phosphate and D-lactate. Together with AnmK, is also required for the utilization of anhydro-N-acetylmuramic acid (anhMurNAc) either imported from the medium or derived from its own cell wall murein, and thus plays a role in cell wall recycling. This is N-acetylmuramic acid 6-phosphate etherase from Francisella tularensis subsp. tularensis (strain SCHU S4 / Schu 4).